The sequence spans 507 residues: Glycerol kinase (507 aa).

Position 15 (T15) interacts with ADP. Positions 15, 16, and 17 each coordinate ATP. Residue T15 participates in sn-glycerol 3-phosphate binding. R19 lines the ADP pocket. Positions 85, 86, 137, and 250 each coordinate sn-glycerol 3-phosphate. Glycerol is bound by residues R85, E86, Y137, D250, and Q251. The ADP site is built by T272, G316, and G418. T272, G316, and G418 together coordinate ATP.

It belongs to the FGGY kinase family.

It catalyses the reaction glycerol + ATP = sn-glycerol 3-phosphate + ADP + H(+). Its pathway is polyol metabolism; glycerol degradation via glycerol kinase pathway; sn-glycerol 3-phosphate from glycerol: step 1/1. Inhibited by fructose 1,6-bisphosphate (FBP). Its function is as follows. Key enzyme in the regulation of glycerol uptake and metabolism. Catalyzes the phosphorylation of glycerol to yield sn-glycerol 3-phosphate. The protein is Glycerol kinase of Malacoplasma penetrans (strain HF-2) (Mycoplasma penetrans).